Consider the following 183-residue polypeptide: Small ribosomal subunit protein eS10z (183 aa).

Residues 91 to 183 are disordered; the sequence is LKKSARPPGR…GAGPTSSSME (93 aa). Residues 109 to 130 show a composition bias toward basic and acidic residues; the sequence is DRPRGPPRFEGDRPRFGDRDGY. Composition is skewed to gly residues over residues 131-146 and 161-175; these read RGGP…GEKG and GRPG…GFGA.

This sequence belongs to the eukaryotic ribosomal protein eS10 family.

The protein localises to the cytoplasm. The polypeptide is Small ribosomal subunit protein eS10z (Oryza sativa subsp. japonica (Rice)).